A 185-amino-acid polypeptide reads, in one-letter code: Ribosome-recycling factor (185 aa).

The disordered stretch occupies residues 136-159 (NEQLKSQQKDGKMSEDELKRSQDE).

It belongs to the RRF family.

The protein resides in the cytoplasm. In terms of biological role, responsible for the release of ribosomes from messenger RNA at the termination of protein biosynthesis. May increase the efficiency of translation by recycling ribosomes from one round of translation to another. The protein is Ribosome-recycling factor of Pelotomaculum thermopropionicum (strain DSM 13744 / JCM 10971 / SI).